The chain runs to 190 residues: Xanthine phosphoribosyltransferase 1 (190 aa).

2 residues coordinate xanthine: L20 and N27. 129–133 (AQGCA) is a 5-phospho-alpha-D-ribose 1-diphosphate binding site. K157 lines the xanthine pocket.

The protein belongs to the purine/pyrimidine phosphoribosyltransferase family. Xpt subfamily. In terms of assembly, homodimer.

It is found in the cytoplasm. It carries out the reaction XMP + diphosphate = xanthine + 5-phospho-alpha-D-ribose 1-diphosphate. It functions in the pathway purine metabolism; XMP biosynthesis via salvage pathway; XMP from xanthine: step 1/1. Functionally, converts the preformed base xanthine, a product of nucleic acid breakdown, to xanthosine 5'-monophosphate (XMP), so it can be reused for RNA or DNA synthesis. The sequence is that of Xanthine phosphoribosyltransferase 1 from Clostridium perfringens (strain ATCC 13124 / DSM 756 / JCM 1290 / NCIMB 6125 / NCTC 8237 / Type A).